Here is a 763-residue protein sequence, read N- to C-terminus: Palmitoyltransferase AKR1 (763 aa).

Polar residues predominate over residues 1–15; it reads MEDNSEQASVSSQAS. The disordered stretch occupies residues 1 to 59; the sequence is MEDNSEQASVSSQASMRPLVSDNGDREAGAGVEVNIANDNDTSVGVDGENGNEDDDPIL. The Cytoplasmic portion of the chain corresponds to 1–307; that stretch reads MEDNSEQASV…KLVKRDDHAK (307 aa). ANK repeat units follow at residues 57-87, 92-121, 126-155, 159-188, 197-226, 230-259, and 292-322; these read PILS…NVSS, EGVT…NVES, LEAT…SATT, QGFN…SKGI, KGRT…SVKI, GGFT…DFFQ, and NGYP…GFAF. A helical transmembrane segment spans residues 308-325; that stretch reads IITFLIPLLVLGFAFFGF. Over 326–330 the chain is Lumenal; the sequence is SHLHI. Residues 331-348 form a helical membrane-spanning segment; the sequence is LFALPVIILLLLASNKFI. At 349-368 the chain is on the cytoplasmic side; it reads KSFLLPSYETKGTNSASLLK. Residues 369–389 form a helical membrane-spanning segment; it reads SPLIAGILFGSIFWLAFVWIL. The Lumenal segment spans residues 390–401; sequence RILPYTFTKRPL. The chain crosses the membrane as a helical span at residues 402–422; that stretch reads GNLTFCAILCFVCYSLFLLAF. The Cytoplasmic portion of the chain corresponds to 423 to 497; sequence SDPGHIGSEN…YNDVGLKNHK (75 aa). The DHHC domain occupies 454–504; that stretch reads SFCLETWVRKPLRSKYSYLNDALILRFDHYCPWIYNDVGLKNHKLFIFFIL. The active-site S-palmitoyl cysteine intermediate is cysteine 484. The helical transmembrane segment at 498 to 518 threads the bilayer; it reads LFIFFILALELGIFSFVKVCL. The Lumenal segment spans residues 519–546; it reads KYFDELDMDGDCFILGDDDLCSGLIGDR. A helical transmembrane segment spans residues 547–567; it reads FTFLIMTWACIQAVWIFSLVI. Residues 568–763 lie on the Cytoplasmic side of the membrane; that stretch reads VQLFQITKGL…DPLSEIDDMV (196 aa).

The protein belongs to the DHHC palmitoyltransferase family. AKR/ZDHHC17 subfamily.

It localises to the early endosome membrane. The protein localises to the golgi apparatus membrane. The catalysed reaction is L-cysteinyl-[protein] + hexadecanoyl-CoA = S-hexadecanoyl-L-cysteinyl-[protein] + CoA. Its function is as follows. Palmitoyltransferase specific for casein kinase 1. In Candida glabrata (strain ATCC 2001 / BCRC 20586 / JCM 3761 / NBRC 0622 / NRRL Y-65 / CBS 138) (Yeast), this protein is Palmitoyltransferase AKR1 (AKR1).